Reading from the N-terminus, the 76-residue chain is uncharacterized protein (76 aa).

3 consecutive transmembrane segments (helical) span residues 2–22 (LKVA…YSLF), 28–48 (LLIV…VEAI), and 56–76 (EYLL…KFII).

It is found in the cell membrane. This is an uncharacterized protein from Bacillus subtilis (strain 168).